Here is a 225-residue protein sequence, read N- to C-terminus: Transcriptional regulatory protein AfsQ1 (225 aa).

The Response regulatory domain occupies 3–116 (SLLLIEDDDA…VLDARIRAVL (114 aa)). Aspartate 52 is subject to 4-aspartylphosphate. A DNA-binding region (ompR/PhoB-type) is located at residues 124–223 (TDSASFGSLV…VRGVGYRLDP (100 aa)).

Phosphorylated by AfsQ2.

It is found in the cytoplasm. The protein localises to the nucleoid. In terms of biological role, forms part of a two-component regulatory system AfsQ1/AfsQ2 involved in secondary metabolism. This is Transcriptional regulatory protein AfsQ1 from Streptomyces coelicolor (strain ATCC BAA-471 / A3(2) / M145).